Consider the following 689-residue polypeptide: Glycine--tRNA ligase beta subunit (689 aa).

It belongs to the class-II aminoacyl-tRNA synthetase family. Tetramer of two alpha and two beta subunits.

The protein resides in the cytoplasm. The enzyme catalyses tRNA(Gly) + glycine + ATP = glycyl-tRNA(Gly) + AMP + diphosphate. In Klebsiella pneumoniae (strain 342), this protein is Glycine--tRNA ligase beta subunit.